Consider the following 313-residue polypeptide: Porphobilinogen deaminase (313 aa).

Cys-240 carries the S-(dipyrrolylmethanemethyl)cysteine modification.

This sequence belongs to the HMBS family. In terms of assembly, monomer. It depends on dipyrromethane as a cofactor.

The enzyme catalyses 4 porphobilinogen + H2O = hydroxymethylbilane + 4 NH4(+). It participates in porphyrin-containing compound metabolism; protoporphyrin-IX biosynthesis; coproporphyrinogen-III from 5-aminolevulinate: step 2/4. Its function is as follows. Tetrapolymerization of the monopyrrole PBG into the hydroxymethylbilane pre-uroporphyrinogen in several discrete steps. The chain is Porphobilinogen deaminase from Moorella thermoacetica (strain ATCC 39073 / JCM 9320).